The chain runs to 402 residues: 1-deoxy-D-xylulose 5-phosphate reductoisomerase (402 aa).

6 residues coordinate NADPH: threonine 10, glycine 11, serine 12, isoleucine 13, asparagine 38, and asparagine 124. Lysine 125 contacts 1-deoxy-D-xylulose 5-phosphate. An NADPH-binding site is contributed by glutamate 126. Residue aspartate 150 participates in Mn(2+) binding. Positions 151, 152, 186, and 209 each coordinate 1-deoxy-D-xylulose 5-phosphate. Position 152 (glutamate 152) interacts with Mn(2+). Residue glycine 215 participates in NADPH binding. Serine 222, asparagine 227, lysine 228, and glutamate 231 together coordinate 1-deoxy-D-xylulose 5-phosphate. Glutamate 231 contacts Mn(2+).

It belongs to the DXR family. Requires Mg(2+) as cofactor. It depends on Mn(2+) as a cofactor.

The catalysed reaction is 2-C-methyl-D-erythritol 4-phosphate + NADP(+) = 1-deoxy-D-xylulose 5-phosphate + NADPH + H(+). It functions in the pathway isoprenoid biosynthesis; isopentenyl diphosphate biosynthesis via DXP pathway; isopentenyl diphosphate from 1-deoxy-D-xylulose 5-phosphate: step 1/6. Its function is as follows. Catalyzes the NADPH-dependent rearrangement and reduction of 1-deoxy-D-xylulose-5-phosphate (DXP) to 2-C-methyl-D-erythritol 4-phosphate (MEP). This is 1-deoxy-D-xylulose 5-phosphate reductoisomerase from Vibrio vulnificus (strain CMCP6).